The chain runs to 601 residues: Probable Xaa-Pro aminopeptidase P (601 aa).

Residues D398, D409, E507, and E521 each coordinate Mn(2+).

It belongs to the peptidase M24B family. The cofactor is Mn(2+).

It catalyses the reaction Release of any N-terminal amino acid, including proline, that is linked to proline, even from a dipeptide or tripeptide.. In terms of biological role, catalyzes the removal of a penultimate prolyl residue from the N-termini of peptides. This chain is Probable Xaa-Pro aminopeptidase P (ampp), found in Sclerotinia sclerotiorum (strain ATCC 18683 / 1980 / Ss-1) (White mold).